Reading from the N-terminus, the 696-residue chain is Iron-sulfur clusters transporter ATM1, mitochondrial (696 aa).

The N-terminal 67 residues, 1–67 (MIKWGLFGAV…RFFSSSHKLG (67 aa)), are a transit peptide targeting the mitochondrion. At 68 to 109 (VNTKEDSSTYLFGRKISTSESKMLKSLLVTIWPKNKPSFKLR) the chain is on the mitochondrial matrix side. Residues 110 to 131 (VIFALSLLIASKLLNVEVPFFF) form a helical membrane-spanning segment. The region spanning 110 to 400 (VIFALSLLIA…LGSVYRELKQ (291 aa)) is the ABC transmembrane type-1 domain. The Mitochondrial intermembrane portion of the chain corresponds to 132–154 (KKIIDEMNVDWNDQLGTVGTVIG). A helical membrane pass occupies residues 155 to 178 (TLIIAYGGARFGAVLFGELRNAVF). The Mitochondrial matrix portion of the chain corresponds to 179-227 (ASVAQTAIKRVAHNTFVHLLNMDLNFHLSRQTGGLTRAIDRGTKGISYV). The helical transmembrane segment at 228-251 (LNAMVFHIIPISFEISMVCGILIY) threads the bilayer. Asparagine 252 is a topological domain (mitochondrial intermembrane). Residues 253–273 (YGLSFAAVTLATMLSYSVFTI) traverse the membrane as a helical segment. Topologically, residues 274–339 (KTTAWRTGFR…ASVKVATSLA (66 aa)) are mitochondrial matrix. Glutathione-binding positions include 279–283 (RTGFR) and 342–345 (NAGQ). A helical membrane pass occupies residues 340-358 (YLNAGQNFIFTSALTAMMY). Residues 359–373 (MGCNGVATGSLTVGD) are Mitochondrial intermembrane-facing. Residues 374 to 395 (LVLINQLVFQLSVPLSFLGSVY) form a helical membrane-spanning segment. Residue glycine 392 coordinates glutathione. At 396-696 (RELKQSLLDM…EYAKETEEQK (301 aa)) the chain is on the mitochondrial matrix side. One can recognise an ABC transporter domain in the interval 438 to 674 (IKFENVTFGY…PNSLYSQLWN (237 aa)). ATP-binding positions include tyrosine 447 and 471–482 (GPSGSGKSTILR).

It belongs to the ABC transporter superfamily. ABCB family. Heavy Metal importer (TC 3.A.1.210) subfamily. In terms of assembly, homodimer.

The protein localises to the mitochondrion inner membrane. Performs an essential function in the generation of cytoplasmic iron-sulfur proteins by mediating the ATP-dependent export of Fe/S cluster precursors synthesized by NFS1 and other mitochondrial proteins. Hydrolyzes ATP. Binds glutathione and may function by transporting a glutathione-conjugated iron-sulfur compound. The sequence is that of Iron-sulfur clusters transporter ATM1, mitochondrial from Debaryomyces hansenii (strain ATCC 36239 / CBS 767 / BCRC 21394 / JCM 1990 / NBRC 0083 / IGC 2968) (Yeast).